The sequence spans 454 residues: Flavonoid 3-O-glucosyltransferase (454 aa).

T25 provides a ligand contact to UDP. Catalysis depends on H26, which acts as the Proton acceptor. Residue R89 coordinates myricetin. D124 (charge relay) is an active-site residue. Myricetin is bound by residues H155, E192, and F202. UDP is bound by residues S282, S308, W334, and A335. UDP-alpha-D-glucose-binding residues include A335, Q337, H352, W355, N356, S357, and E360. A UDP-binding site is contributed by H352. 3 residues coordinate UDP: N356, S357, and E360. Residue G375 coordinates myricetin. The UDP-alpha-D-glucose site is built by D376 and Q377.

It belongs to the UDP-glycosyltransferase family. As to expression, highly expressed in flower buds, flowers and pods. Lower expression in leaves, petioles and stems.

It participates in secondary metabolite biosynthesis; flavonoid biosynthesis. Catalyzes the glycosylation of flavonoids at the 3-O-position. Glycosylates the 7-O-position if the 3-O-position is not available. Also able to perform 3-O-glycosylation of anthocyanidins. In Medicago truncatula (Barrel medic), this protein is Flavonoid 3-O-glucosyltransferase (UGT78G1).